The primary structure comprises 29 residues: Cytochrome b6-f complex subunit 8 (29 aa).

A helical membrane pass occupies residues 3–23 (IVSFAWAALMVVFTFSLSLVV).

The protein belongs to the PetN family. In terms of assembly, the 4 large subunits of the cytochrome b6-f complex are cytochrome b6, subunit IV (17 kDa polypeptide, PetD), cytochrome f and the Rieske protein, while the 4 small subunits are PetG, PetL, PetM and PetN. The complex functions as a dimer.

Its subcellular location is the plastid. It is found in the chloroplast thylakoid membrane. In terms of biological role, component of the cytochrome b6-f complex, which mediates electron transfer between photosystem II (PSII) and photosystem I (PSI), cyclic electron flow around PSI, and state transitions. The protein is Cytochrome b6-f complex subunit 8 of Phalaenopsis aphrodite subsp. formosana (Moth orchid).